We begin with the raw amino-acid sequence, 699 residues long: NAD(P)H-quinone oxidoreductase subunit 5, chloroplastic (699 aa).

Helical transmembrane passes span 1–21 (WIIP…LLLF), 32–52 (WAFP…NLSI), 81–101 (IDPL…TVLI), 117–137 (FAYM…SNLI), 139–159 (IYIF…FWFT), 177–197 (GDFG…SFEF), 216–236 (LFVT…SAQF), 250–270 (TPIS…FLVA), 272–292 (LLPL…IGII), 319–339 (LGYM…FHLI), 346–366 (ALLF…VGYS), 388–408 (ISFL…CFWS), 417–437 (WLYS…TAFY), 539–559 (LFPL…GISF), and 598–618 (IFSV…YKPI).

It belongs to the complex I subunit 5 family. NDH is composed of at least 16 different subunits, 5 of which are encoded in the nucleus.

Its subcellular location is the plastid. The protein localises to the chloroplast thylakoid membrane. It catalyses the reaction a plastoquinone + NADH + (n+1) H(+)(in) = a plastoquinol + NAD(+) + n H(+)(out). It carries out the reaction a plastoquinone + NADPH + (n+1) H(+)(in) = a plastoquinol + NADP(+) + n H(+)(out). NDH shuttles electrons from NAD(P)H:plastoquinone, via FMN and iron-sulfur (Fe-S) centers, to quinones in the photosynthetic chain and possibly in a chloroplast respiratory chain. The immediate electron acceptor for the enzyme in this species is believed to be plastoquinone. Couples the redox reaction to proton translocation, and thus conserves the redox energy in a proton gradient. The protein is NAD(P)H-quinone oxidoreductase subunit 5, chloroplastic (ndhF) of Digitalis grandiflora (Yellow foxglove).